Here is a 383-residue protein sequence, read N- to C-terminus: Acetylornithine deacetylase (383 aa).

Histidine 80 is a binding site for Zn(2+). Residue aspartate 82 is part of the active site. Residue aspartate 112 participates in Zn(2+) binding. The active site involves glutamate 144. Zn(2+)-binding residues include glutamate 145, glutamate 169, and histidine 355.

Belongs to the peptidase M20A family. ArgE subfamily. Homodimer. Zn(2+) is required as a cofactor. Requires Co(2+) as cofactor. The cofactor is glutathione.

The protein resides in the cytoplasm. It carries out the reaction N(2)-acetyl-L-ornithine + H2O = L-ornithine + acetate. It functions in the pathway amino-acid biosynthesis; L-arginine biosynthesis; L-ornithine from N(2)-acetyl-L-ornithine (linear): step 1/1. Catalyzes the hydrolysis of the amide bond of N(2)-acetylated L-amino acids. Cleaves the acetyl group from N-acetyl-L-ornithine to form L-ornithine, an intermediate in L-arginine biosynthesis pathway, and a branchpoint in the synthesis of polyamines. The sequence is that of Acetylornithine deacetylase from Shigella boydii serotype 18 (strain CDC 3083-94 / BS512).